A 361-amino-acid polypeptide reads, in one-letter code: Free fatty acid receptor 4 (361 aa).

The segment at 1 to 21 (MSPECAQTTGPGPSRTPDQVN) is disordered. The Extracellular portion of the chain corresponds to 1–45 (MSPECAQTTGPGPSRTPDQVNRTHFPFFSDVKGDHRLVLSVLETT). The N-linked (GlcNAc...) asparagine glycan is linked to Asn-21. The chain crosses the membrane as a helical span at residues 46 to 66 (VLGLIFVVSLLGNVCALVLVV). Topologically, residues 67-77 (RRRRRGATVSL) are cytoplasmic. The chain crosses the membrane as a helical span at residues 78–98 (VLNLFCADLLFTSAIPLVLVV). At 99–103 (RWTEA) the chain is on the extracellular side. Residues 104–124 (WLLGPVVCHLLFYVMTMSGSV) traverse the membrane as a helical segment. A disulfide bridge links Cys-111 with Cys-194. Topologically, residues 125-156 (TILTLAAVSLERMVCIVRLRRGLSGPGRRTQA) are cytoplasmic. A helical transmembrane segment spans residues 157–177 (ALLAFIWGYSALAALPLCILF). Residues 178 to 204 (RVVPQRLPGGDQEIPICTLDWPNRIGE) lie on the Extracellular side of the membrane. A helical membrane pass occupies residues 205-225 (ISWDVFFVTLNFLVPGLVIVI). Over 226–268 (SYSKILQITKASRKRLTLSLAYSESHQIRVSQQDYRLFRTLFL) the chain is Cytoplasmic. The chain crosses the membrane as a helical span at residues 269–289 (LMVSFFIMWSPIIITILLILI). At 290 to 295 (QNFRQD) the chain is on the extracellular side. The chain crosses the membrane as a helical span at residues 296–316 (LVIWPSLFFWVVAFTFANSAL). Residues 317 to 361 (NPILYNMSLFRSEWRKIFCCFFFPEKGAIFTETSIRRNDLSVIST) lie on the Cytoplasmic side of the membrane. 2 positions are modified to phosphothreonine: Thr-347 and Thr-349. A phosphoserine mark is found at Ser-350, Ser-357, and Ser-360.

Belongs to the G-protein coupled receptor 1 family. As to quaternary structure, interacts (via C-terminus) with ARRB2 following LCFAs stimulation. Post-translationally, phosphorylated at two clusters of Ser and Thr residues located in the intracellular C-terminus. Prerequisite for FFAR4 internalization via an ARRB2-dependent pathway.

It is found in the cell membrane. Its subcellular location is the endosome membrane. The protein resides in the lysosome membrane. The protein localises to the cell projection. It localises to the cilium membrane. Its function is as follows. G-protein-coupled receptor for long-chain fatty acids (LCFAs) with a major role in adipogenesis, energy metabolism and inflammation. Signals via G-protein and beta-arrestin pathways. LCFAs sensing initiates activation of phosphoinositidase C-linked G proteins GNAQ and GNA11 (G(q)/G(11)), inducing a variety of cellular responses via second messenger pathways such as intracellular calcium mobilization, modulation of cyclic adenosine monophosphate (cAMP) production, and mitogen-activated protein kinases (MAPKs). After LCFAs binding, associates with beta-arrestin ARRB2 that acts as an adapter protein coupling the receptor to specific downstream signaling pathways, as well as mediating receptor endocytosis. In response to dietary fats, plays an important role in the regulation of adipocyte proliferation and differentiation. Acts as a receptor for omega-3 polyunsaturated fatty acids (PUFAs) at primary cilium of perivascular preadipocytes, initiating an adipogenic program via cAMP and CTCF-dependent chromatin remodeling that ultimately results in transcriptional activation of adipogenic genes and cell cycle entry. Induces differentiation of brown and beige adipocytes probably via autocrine and endocrine functions of FGF21 hormone. Contributes to the thermogenic activation of brown adipose tissue and the browning of white adipose tissue. Activates brown adipocytes by initiating intracellular calcium signaling leading to mitochondrial depolarization and fission, and overall increased mitochondrial respiration. Consequently stimulates fatty acid uptake and oxidation in mitochondria together with UCP1-mediated thermogenic respiration, eventually reducing fat mass. Regulates bi-potential differentiation of bone marrow mesenchymal stem cells toward osteoblasts or adipocytes likely by up-regulating distinct integrins. In response to dietary fats regulates hormone secretion and appetite. Stimulates GIP and GLP1 secretion from enteroendocrine cells as well as GCG secretion in pancreatic alpha cells, thereby playing a role in the regulation of blood glucose levels. Negatively regulates glucose-induced SST secretion in pancreatic delta cells. Mediates LCFAs inhibition of GHRL secretion, an appetite-controlling hormone. In taste buds, contributes to sensing of dietary fatty acids by the gustatory system. During the inflammatory response, promotes anti-inflammatory M2 macrophage differentiation in adipose tissue. Mediates the anti-inflammatory effects of omega-3 PUFAs via inhibition of NLRP3 inflammasome activation. In this pathway, interacts with adapter protein ARRB2 and inhibits the priming step triggered by Toll-like receptors (TLRs) at the level of TAK1 and TAB1. Further inhibits the activation step when ARRB2 directly associates with NLRP3, leading to inhibition of pro-inflammatory cytokine release. Mediates LCFAs anti-apoptotic effects. This chain is Free fatty acid receptor 4 (Ffar4), found in Rattus norvegicus (Rat).